A 103-amino-acid chain; its full sequence is Large ribosomal subunit protein bL21 (103 aa).

This sequence belongs to the bacterial ribosomal protein bL21 family. As to quaternary structure, part of the 50S ribosomal subunit. Contacts protein L20.

In terms of biological role, this protein binds to 23S rRNA in the presence of protein L20. The protein is Large ribosomal subunit protein bL21 of Alkaliphilus oremlandii (strain OhILAs) (Clostridium oremlandii (strain OhILAs)).